The primary structure comprises 431 residues: Glutamyl-tRNA(Gln) amidotransferase subunit A (431 aa).

Active-site charge relay system residues include lysine 55 and serine 130. Catalysis depends on serine 154, which acts as the Acyl-ester intermediate.

It belongs to the amidase family. GatA subfamily. As to quaternary structure, heterotrimer of A, B and C subunits.

It catalyses the reaction L-glutamyl-tRNA(Gln) + L-glutamine + ATP + H2O = L-glutaminyl-tRNA(Gln) + L-glutamate + ADP + phosphate + H(+). In terms of biological role, allows the formation of correctly charged Gln-tRNA(Gln) through the transamidation of misacylated Glu-tRNA(Gln) in organisms which lack glutaminyl-tRNA synthetase. The reaction takes place in the presence of glutamine and ATP through an activated gamma-phospho-Glu-tRNA(Gln). In Methanococcus maripaludis (strain DSM 14266 / JCM 13030 / NBRC 101832 / S2 / LL), this protein is Glutamyl-tRNA(Gln) amidotransferase subunit A.